Reading from the N-terminus, the 188-residue chain is Protein GrpE (188 aa).

Residues 1–22 (MEENKQNQNLNTEETTEQQTEA) show a composition bias toward low complexity. Residues 1-26 (MEENKQNQNLNTEETTEQQTEAETVE) are disordered.

The protein belongs to the GrpE family. As to quaternary structure, homodimer.

It is found in the cytoplasm. Functionally, participates actively in the response to hyperosmotic and heat shock by preventing the aggregation of stress-denatured proteins, in association with DnaK and GrpE. It is the nucleotide exchange factor for DnaK and may function as a thermosensor. Unfolded proteins bind initially to DnaJ; upon interaction with the DnaJ-bound protein, DnaK hydrolyzes its bound ATP, resulting in the formation of a stable complex. GrpE releases ADP from DnaK; ATP binding to DnaK triggers the release of the substrate protein, thus completing the reaction cycle. Several rounds of ATP-dependent interactions between DnaJ, DnaK and GrpE are required for fully efficient folding. The chain is Protein GrpE from Exiguobacterium sibiricum (strain DSM 17290 / CCUG 55495 / CIP 109462 / JCM 13490 / 255-15).